Consider the following 246-residue polypeptide: MGSLDKDNQDICPICLDPLKEAVSTDCRHLFCRMCLTQHMDKASVSGILSCPVCRKPCSEGVLGDNYICHTHQKRVRRFCEASGHLLCEECLQSPEHQSHTELSIENAISHYKERLNRRSRKLRKDLGNLQQLKAQEKKMLQALQVDCECHRLRTDLQNQDQTKEQLKALPWHWLDQEDLPEEVAKIFSFSEAVTQLSILVSGLERMAKDLDASTLKDASDLLDRSAPQKLEGLLSRVSPAGPKLS.

The RING-type zinc finger occupies 12–55 (CPICLDPLKEAVSTDCRHLFCRMCLTQHMDKASVSGILSCPVCR). The B box-type zinc finger occupies 64–105 (GDNYICHTHQKRVRRFCEASGHLLCEECLQSPEHQSHTELSI). C69, H72, C91, and H97 together coordinate Zn(2+). Residues 105 to 170 (IENAISHYKE…DQTKEQLKAL (66 aa)) are a coiled coil.

Belongs to the TRIM/RBCC family. As to quaternary structure, interacts with NEDD8.

It catalyses the reaction S-ubiquitinyl-[E2 ubiquitin-conjugating enzyme]-L-cysteine + [acceptor protein]-L-lysine = [E2 ubiquitin-conjugating enzyme]-L-cysteine + N(6)-ubiquitinyl-[acceptor protein]-L-lysine.. Functionally, E3 ubiquitin-protein ligase that plays a role in the limitation of the innate immune response. Mediates inhibition of the RLR signaling pathway by ubiquitinating RIGI and IFIH1 receptors, leading to their proteasomal degradation. Also promotes the neddylation of IKBKG/NEMO, stabilizing NFKBIA, and thereby inhibiting of NF-kappa-B nuclear translocation and activation. The protein is E3 ubiquitin ligase TRIM40 (Trim40) of Mus musculus (Mouse).